Consider the following 147-residue polypeptide: MLMPKRVKHRKVQRGRMKGKATRGNFIAYGDFAIQATECAWITSNQIEAARIAINRYVKRGGKLWIKIFPDKPVTQKPAETRMGSGKGSPEYWVAVVKPGRVLFEMSDVTEEQAREAFRLASHKLPIKTKFVTRKDFEEMGGEANEG.

Belongs to the universal ribosomal protein uL16 family. As to quaternary structure, part of the 50S ribosomal subunit.

In terms of biological role, binds 23S rRNA and is also seen to make contacts with the A and possibly P site tRNAs. The polypeptide is Large ribosomal subunit protein uL16 (Clostridium acetobutylicum (strain ATCC 824 / DSM 792 / JCM 1419 / IAM 19013 / LMG 5710 / NBRC 13948 / NRRL B-527 / VKM B-1787 / 2291 / W)).